We begin with the raw amino-acid sequence, 247 residues long: MRSSNLTTTVHFLSPVFAAFFPSHGTEQEDAPIVRVKTAKGRKISSTNWIRRQVNDQYVSLAKKEGYRSRSAYKLIEINDKFKILQRGRFVLDLGSSPGGWAQVASKNTAIIDSTEPTVVAVDIQSMKDIHNVSFVQCDIDSDHDLLNEKLSGRKFDVVLSDMAPKSCGHRQVDHANIINLCELARDIALEYLNPNGSFVTKLLHGEYEQEFRRSIMTHFGVVSYFKPKSSRKDSSEIYLVALKFKG.

Positions 99, 101, 123, 139, and 162 each coordinate S-adenosyl-L-methionine. Lysine 202 acts as the Proton acceptor in catalysis.

It belongs to the class I-like SAM-binding methyltransferase superfamily. RNA methyltransferase RlmE family.

It localises to the cytoplasm. The enzyme catalyses uridine(2552) in 23S rRNA + S-adenosyl-L-methionine = 2'-O-methyluridine(2552) in 23S rRNA + S-adenosyl-L-homocysteine + H(+). In terms of biological role, specifically methylates the uridine in position 2552 of 23S rRNA at the 2'-O position of the ribose in the fully assembled 50S ribosomal subunit. The protein is Ribosomal RNA large subunit methyltransferase E of Anaplasma phagocytophilum (strain HZ).